We begin with the raw amino-acid sequence, 258 residues long: UPF0246 protein CGSHiEE_07045 (258 aa).

Belongs to the UPF0246 family.

This Haemophilus influenzae (strain PittEE) protein is UPF0246 protein CGSHiEE_07045.